The chain runs to 831 residues: Translation initiation factor IF-2 (831 aa).

A tr-type G domain is found at 329-499 (TRAPVVTVMG…LLISEMQDLK (171 aa)). Residues 338-345 (GHVDHGKT) form a G1 region. Residue 338–345 (GHVDHGKT) coordinates GTP. The G2 stretch occupies residues 363 to 367 (GITQH). The interval 385–388 (DTPG) is G3. GTP is bound by residues 385–389 (DTPGH) and 439–442 (NKID). Residues 439–442 (NKID) are G4. The tract at residues 475 to 477 (SAL) is G5.

It belongs to the TRAFAC class translation factor GTPase superfamily. Classic translation factor GTPase family. IF-2 subfamily.

Its subcellular location is the cytoplasm. Its function is as follows. One of the essential components for the initiation of protein synthesis. Protects formylmethionyl-tRNA from spontaneous hydrolysis and promotes its binding to the 30S ribosomal subunits. Also involved in the hydrolysis of GTP during the formation of the 70S ribosomal complex. In Rickettsia prowazekii (strain Madrid E), this protein is Translation initiation factor IF-2 (infB).